A 336-amino-acid chain; its full sequence is Abasic site processing protein HMCES (336 aa).

C2 acts as the Nucleophile in catalysis. C2 is subject to Thiazolidine linkage to a ring-opened DNA abasic site. The tract at residues 26 to 51 is disordered; the sequence is RQKCPKWRDGDTDKYQPSYNKSPQSN. Positions 40-51 are enriched in polar residues; sequence YQPSYNKSPQSN. E129 is a catalytic residue. Positions 285–336 are disordered; the sequence is QNKSPKKEESRSIIQSPKLSQFGAPPKKTSAGLMQQWLKKEDGEPSPKRAKK. Residues 322 to 336 show a composition bias toward basic and acidic residues; it reads LKKEDGEPSPKRAKK.

Belongs to the SOS response-associated peptidase family. Ubiquitination of the hmces DNA-protein cross-link by rfwd3 may promotes its degradation.

Its subcellular location is the chromosome. Formation and reversal of DNA-protein cross-link depends on DNA context. Catalyzes formation of the thiazolidine linkage in presence of abasic sites in single-stranded DNA. Mediates the reversal of the thiazolidine cross-link in presence of double stranded DNA. In terms of biological role, sensor of abasic sites in single-stranded DNA (ssDNA) required to preserve genome integrity by promoting error-free repair of abasic sites. Acts as an enzyme that recognizes and binds abasic sites in ssDNA at replication forks and chemically modifies the lesion by forming a covalent cross-link with DNA: forms a stable thiazolidine linkage between a ring-opened abasic site and the alpha-amino and sulfhydryl substituents of its N-terminal catalytic cysteine residue. The hmces DNA-protein cross-link is then either reversed or degraded. Hmces is able to catalyze the reversal of its thiazolidine cross-link and cycle between a cross-link and a non-cross-linked state depending on DNA context: mediates self-reversal of the thiazolidine cross-link in double stranded DNA, allowing apex1 to initiate downstream repair of abasic sites. The hmces DNA-protein cross-link can also be degraded by the sprtn metalloprotease following unfolding by the brip1/fancj helicase. Promotes error-free repair of abasic sites by protecting abasic sites from translesion synthesis (TLS) polymerases and endonucleases that are error-prone and would generate mutations and double-strand breaks. Acts as a protease: mediates autocatalytic processing of its N-terminal methionine in order to expose the catalytic cysteine. The HMCES DNA-protein cross-link is then either reversed or degraded. According to a model, the HMCES DNA-protein cross-link. The sequence is that of Abasic site processing protein HMCES from Xenopus laevis (African clawed frog).